The sequence spans 123 residues: Small ribosomal subunit protein bS16 (123 aa).

The tract at residues 87–123 is disordered; it reads VKNNPVKAKPGKRAQERAAEKAQKVADAAAAAADAAE. Residues 99–110 are compositionally biased toward basic and acidic residues; sequence RAQERAAEKAQK. Residues 111–123 are compositionally biased toward low complexity; the sequence is VADAAAAAADAAE.

This sequence belongs to the bacterial ribosomal protein bS16 family.

The chain is Small ribosomal subunit protein bS16 from Rhizobium johnstonii (strain DSM 114642 / LMG 32736 / 3841) (Rhizobium leguminosarum bv. viciae).